Consider the following 467-residue polypeptide: tRNA-2-methylthio-N(6)-dimethylallyladenosine synthase (467 aa).

The segment at methionine 1 to alanine 20 is disordered. The MTTase N-terminal domain maps to arginine 23–glycine 143. 6 residues coordinate [4Fe-4S] cluster: cysteine 32, cysteine 68, cysteine 106, cysteine 184, cysteine 188, and cysteine 191. Positions arginine 170–alanine 402 constitute a Radical SAM core domain. One can recognise a TRAM domain in the interval aspartate 405 to alanine 467.

Belongs to the methylthiotransferase family. MiaB subfamily. In terms of assembly, monomer. It depends on [4Fe-4S] cluster as a cofactor.

Its subcellular location is the cytoplasm. It catalyses the reaction N(6)-dimethylallyladenosine(37) in tRNA + (sulfur carrier)-SH + AH2 + 2 S-adenosyl-L-methionine = 2-methylsulfanyl-N(6)-dimethylallyladenosine(37) in tRNA + (sulfur carrier)-H + 5'-deoxyadenosine + L-methionine + A + S-adenosyl-L-homocysteine + 2 H(+). Its function is as follows. Catalyzes the methylthiolation of N6-(dimethylallyl)adenosine (i(6)A), leading to the formation of 2-methylthio-N6-(dimethylallyl)adenosine (ms(2)i(6)A) at position 37 in tRNAs that read codons beginning with uridine. This chain is tRNA-2-methylthio-N(6)-dimethylallyladenosine synthase, found in Brucella suis (strain ATCC 23445 / NCTC 10510).